A 216-amino-acid chain; its full sequence is MNFLLTWIHWGLAALLYLQSAELSKAAPALGDGERKPNEVIKFLEVYERSFCRTIETLVDIFQEYPDEVEYIFRPSCVPLMRCAGCCGDEGLECVPVDVYNVTMEIARIKPHQSQHIAHMSFLQHSKCDCRPKKDVKNKQEKKSKRGKGKGQKRKRKKGRYKPPSFHCEPCSERRKHLFVQDPQTCKCSCKFTDSRCKSRQLELNERTCRCEKPRR.

Positions 1-26 (MNFLLTWIHWGLAALLYLQSAELSKA) are cleaved as a signal peptide. 3 disulfides stabilise this stretch: cysteine 52/cysteine 94, cysteine 83/cysteine 128, and cysteine 87/cysteine 130. An N-linked (GlcNAc...) asparagine glycan is attached at asparagine 101. A compositionally biased stretch (basic and acidic residues) spans 132 to 141 (PKKDVKNKQE). The interval 132–167 (PKKDVKNKQEKKSKRGKGKGQKRKRKKGRYKPPSFH) is disordered. The segment covering 142–161 (KKSKRGKGKGQKRKRKKGRY) has biased composition (basic residues).

This sequence belongs to the PDGF/VEGF growth factor family. In terms of assembly, homodimer; disulfide-linked. Also found as heterodimer with PGF.

Growth factor active in angiogenesis, vasculogenesis and endothelial cell growth. Induces endothelial cell proliferation, promotes cell migration, inhibits apoptosis and induces permeabilization of blood vessels. Binds to the FLT1/VEGFR1 and KDR/VEGFR2 receptors, heparan sulfate and heparin. The chain is Vascular endothelial growth factor A (VEGFA) from Gallus gallus (Chicken).